A 155-amino-acid polypeptide reads, in one-letter code: MAKGEGKVVAQNKKARHDYTIVDTIEAGMVLTGTEIKSVRAARINLKDGFAQIKNGEAWLSNVHIAPYEEGNIWNQEPERRRKLLLHKKQIQKLEQETKGTGMTLVPLKVYLKDGYAKLLLGLAKGKHDYDKRESIKRREQNRDIARQMKNFNTR.

It belongs to the SmpB family.

It localises to the cytoplasm. In terms of biological role, required for rescue of stalled ribosomes mediated by trans-translation. Binds to transfer-messenger RNA (tmRNA), required for stable association of tmRNA with ribosomes. tmRNA and SmpB together mimic tRNA shape, replacing the anticodon stem-loop with SmpB. tmRNA is encoded by the ssrA gene; the 2 termini fold to resemble tRNA(Ala) and it encodes a 'tag peptide', a short internal open reading frame. During trans-translation Ala-aminoacylated tmRNA acts like a tRNA, entering the A-site of stalled ribosomes, displacing the stalled mRNA. The ribosome then switches to translate the ORF on the tmRNA; the nascent peptide is terminated with the 'tag peptide' encoded by the tmRNA and targeted for degradation. The ribosome is freed to recommence translation, which seems to be the essential function of trans-translation. This Streptococcus sanguinis (strain SK36) protein is SsrA-binding protein.